We begin with the raw amino-acid sequence, 632 residues long: Golgin subfamily A member 8O (632 aa).

The segment at 1–76 is disordered; the sequence is MAEETQHNKL…TSSATLKDLE (76 aa). Over residues 38–50 the composition is skewed to polar residues; that stretch reads TNGSIPETATSGG. Coiled-coil stretches lie at residues 85-150 and 209-421; these read VLDS…TDLY and ELEQ…SLMA. Disordered stretches follow at residues 423-452, 505-524, and 552-612; these read PGEG…DPES, DAAL…DEGE, and NSAD…EHPG. The segment covering 427–440 has biased composition (basic and acidic residues); sequence HGGEHLDSEGEEAP. Positions 508–520 are enriched in gly residues; it reads LGGGHHQAGAQGG. The segment covering 569 to 578 has biased composition (basic and acidic residues); it reads AADKHGDLRE.

The protein belongs to the GOLGA6 family.

The chain is Golgin subfamily A member 8O (GOLGA8O) from Homo sapiens (Human).